A 515-amino-acid chain; its full sequence is Leucine-rich repeat transmembrane neuronal protein 2 (515 aa).

The first 33 residues, 1 to 33, serve as a signal peptide directing secretion; it reads MGLHFKWPLGAPMLAAIYAMSVVLKMLPALGMA. One can recognise an LRRNT domain in the interval 34-61; that stretch reads CPPKCRCEKLLFYCDSQGFHSVPNATDK. Residues 34–421 are Extracellular-facing; sequence CPPKCRCEKL…EPDNAIFTQR (388 aa). Residue asparagine 57 is glycosylated (N-linked (GlcNAc...) asparagine). LRR repeat units follow at residues 63-83, 86-107, 110-131, 134-155, 158-179, 182-203, 206-227, 230-251, 254-275, and 278-299; these read SLGL…QFAS, QLTW…AFQG, KLKE…TFTQ, NLQN…LFYG, KLQT…LFWD, SLEF…GFAG, KLRE…HFLR, SLHT…MDWT, TLEK…VFET, and NLKI…ILNS. Asparagine 126 is a glycosylation site (N-linked (GlcNAc...) asparagine). Asparagine 243 carries an N-linked (GlcNAc...) asparagine glycan. Positions 311-362 constitute an LRRCT domain; that stretch reads NLWECSPRVCALASWLGSFQGRWEHSILCHSPDHTQGEDILDAVHGFQLCWN. Asparagine 362 is a glycosylation site (N-linked (GlcNAc...) asparagine). Residues 422–442 form a helical membrane-spanning segment; sequence VITGTMALLFSFFFIIFIVFI. Topologically, residues 443–515 are cytoplasmic; it reads SRKCCPPTLR…QQLPYKECEV (73 aa). An Involved in DLG4-binding motif is present at residues 512–515; it reads ECEV.

It belongs to the LRRTM family. Interacts with DLG4. Interacts with neurexin NRXN1; interaction is mediated by heparan sulfate glycan modification on neurexin. Expressed in neuronal tissues.

The protein resides in the cell membrane. It is found in the postsynaptic cell membrane. Its function is as follows. Involved in the development and maintenance of excitatory synapses in the vertebrate nervous system. Regulates surface expression of AMPA receptors and instructs the development of functional glutamate release sites. Acts as a ligand for the presynaptic receptors NRXN1-A and NRXN1-B. This chain is Leucine-rich repeat transmembrane neuronal protein 2 (Lrrtm2), found in Mus musculus (Mouse).